The sequence spans 356 residues: Protein RecA (356 aa).

Position 78 to 85 (78 to 85) interacts with ATP; the sequence is GPESSGKT.

This sequence belongs to the RecA family.

Its subcellular location is the cytoplasm. In terms of biological role, can catalyze the hydrolysis of ATP in the presence of single-stranded DNA, the ATP-dependent uptake of single-stranded DNA by duplex DNA, and the ATP-dependent hybridization of homologous single-stranded DNAs. It interacts with LexA causing its activation and leading to its autocatalytic cleavage. The sequence is that of Protein RecA from Paracoccus denitrificans.